The following is a 766-amino-acid chain: Slit homolog 2 protein (766 aa).

The N-terminal stretch at 1–30 (MSGIGWQTLSLSLALVLSILNKVAPHACPA) is a signal peptide. The LRRNT domain maps to 31 to 55 (QCSCSGSTVDCHGLALRIVPRNIPR). LRR repeat units follow at residues 56–77 (NTER…DFAG), 80–101 (HLRI…AFHD), 104–125 (ELER…LFLG), 128–149 (KLYR…AFRG), 152–173 (DIKN…AFRA), and 176–197 (DLEV…SFNH). Asparagine 66 is a glycosylation site (N-linked (GlcNAc...) asparagine). N-linked (GlcNAc...) asparagine glycosylation is present at asparagine 186. Residues 209–259 (NNLYCDCHLAWLSDWLRQRPRVGLYTQCMGPSHLRGHNVAEVQKREFVCSD) enclose the LRRCT 1 domain. Positions 268–304 (MAPSCSVLHCPIACTCSNNIVDCRGKGLTEIPTNLPE) constitute an LRRNT 2 domain. Residues cysteine 281 and cysteine 290 are joined by a disulfide bond. LRR repeat units follow at residues 305 to 326 (TITE…AFSP), 329 to 350 (KLRR…AFQG), 353 to 374 (SLNS…LFEG), 377 to 398 (SLQL…AFQD), and 401 to 422 (NLNL…TFSA). In terms of domain architecture, LRRCT 2 spans 434 to 484 (NPFICDCHLKWLADYLHTNPIETSGARCTSPRRLANKRIGQIKSKKFRCSG). 4 disulfide bridges follow: cysteine 438–cysteine 461, cysteine 440–cysteine 482, cysteine 502–cysteine 508, and cysteine 506–cysteine 515. The LRRNT 3 domain occupies 493–529 (SGDCFADLACPEKCRCEGTTVDCSNQKLNKIPDHIPQ). 5 LRR repeats span residues 530–551 (YTAE…GIFK), 555–576 (QLRK…AFEG), 579–600 (GVNE…MFKG), 603–624 (SLKT…SFTG), and 627–648 (SVRL…AFGT). An N-linked (GlcNAc...) asparagine glycan is attached at asparagine 560. Asparagine 619 is a glycosylation site (N-linked (GlcNAc...) asparagine). Positions 660–710 (NPFNCNCHLAWLGEWLRRKRIVTGNPRCQKPYFLKEIPIQDVAIQDFTCDD) constitute an LRRCT 3 domain. 4 disulfide bridges follow: cysteine 664–cysteine 687, cysteine 666–cysteine 708, cysteine 723–cysteine 729, and cysteine 727–cysteine 736. The 37-residue stretch at 714 to 750 (DNSCSPLSRCPSECTCLDTVVRCSNKGLKVLPKGIPR) folds into the LRRNT 4 domain.

Homodimer. Binds ROBO1 and ROBO2 with high affinity. Interacts with GREM1.

It localises to the secreted. Its function is as follows. Thought to act as molecular guidance cue in cellular migration, and function appears to be mediated by interaction with roundabout homolog receptors. During neural development involved in axonal navigation at the ventral midline of the neural tube and projection of axons to different regions. SLIT1 and SLIT2 seem to be essential for midline guidance in the forebrain by acting as repulsive signal preventing inappropriate midline crossing by axons projecting from the olfactory bulb. In spinal cord development may play a role in guiding commissural axons once they reached the floor plate by modulating the response to netrin. In vitro, silences the attractive effect of NTN1 but not its growth-stimulatory effect and silencing requires the formation of a ROBO1-DCC complex. May be implicated in spinal cord midline post-crossing axon repulsion. In vitro, only commissural axons that crossed the midline responded to SLIT2. In the developing visual system appears to function as repellent for retinal ganglion axons by providing a repulsion that directs these axons along their appropriate paths prior to, and after passage through, the optic chiasm. In vitro, collapses and repels retinal ganglion cell growth cones. Seems to play a role in branching and arborization of CNS sensory axons, and in neuronal cell migration. Seems to be involved in regulating leukocyte migration. The polypeptide is Slit homolog 2 protein (Slit2) (Rattus norvegicus (Rat)).